A 327-amino-acid chain; its full sequence is Olfactory receptor 9G4 (327 aa).

Over 1-43 (MIFPSHDSQAFTSVDMEVGNCTILTEFILLGFSADSQWQPILF) the chain is Extracellular. Asparagine 20 carries an N-linked (GlcNAc...) asparagine glycan. Residues 44–64 (GVFLMLYLITLSGNMTLVILI) traverse the membrane as a helical segment. The Cytoplasmic portion of the chain corresponds to 65–71 (RTDSHLH). A helical transmembrane segment spans residues 72–92 (TPMYFFIGNLSFLDFWYTSVY). At 93–113 (TPKILASCVSEDKRISLAGCG) the chain is on the extracellular side. Cysteine 112 and cysteine 194 are disulfide-bonded. The helical transmembrane segment at 114–134 (AQLFFSCVVAYTECYLLAAMA) threads the bilayer. Over 135 to 152 (YDRHAAICNPLLYSGTMS) the chain is Cytoplasmic. A helical membrane pass occupies residues 153 to 173 (TALCTGLVAGSYIGGFLNAIA). The Extracellular portion of the chain corresponds to 174–212 (HTANTFRLHFCGKNIIDHFFCDAPPLVKMSCTNTRVYEK). Residues 213-233 (VLLGVVGFTVLSSILAILISY) form a helical membrane-spanning segment. Topologically, residues 234–252 (VNILLAILRIHSASGRHKA) are cytoplasmic. A helical membrane pass occupies residues 253 to 273 (FSTCASHLISVMLFYGSLLFM). The Extracellular segment spans residues 274 to 286 (YSRPSSTYSLERD). Residues 287-307 (KVAALFYTVINPLLNPLIYSL) form a helical membrane-spanning segment. At 308–327 (RNKDIKEAFRKATQTIQPQT) the chain is on the cytoplasmic side.

This sequence belongs to the G-protein coupled receptor 1 family.

The protein resides in the cell membrane. Functionally, odorant receptor. This is Olfactory receptor 9G4 (OR9G4) from Homo sapiens (Human).